Reading from the N-terminus, the 4334-residue chain is Cytoplasmic dynein 2 heavy chain 1 (4334 aa).

A stem region spans residues 1-1704; that stretch reads MSSDSRKTFV…KVAMAEATFD (1704 aa). 150 to 157 serves as a coordination point for ATP; that stretch reads LGTAVRKG. A coiled-coil region spans residues 1026–1097; that stretch reads QEAKGLTAKL…AHLEEQKGNL (72 aa). AAA regions lie at residues 1705–1929, 1996–2211, 2299–2544, and 2641–2882; these read YTWE…VLGI, KALA…KAFQ, GMDE…WING, and GYER…SSGS. ATP-binding positions include 1743 to 1750, 2034 to 2041, 2334 to 2341, and 2679 to 2686; these read GPAGTGKT, GPSGSGKS, GPEGCGKG, and GNSGVGRR. The tract at residues 2897–3185 is stalk; sequence QIYNRKRTQV…ISVDKAESVL (289 aa). 2 coiled-coil regions span residues 2930-2998 and 3120-3199; these read LSAE…SEVQ and ERVS…RGEK. 2 AAA regions span residues 3260-3492 and 3701-3917; these read LSSE…TVEK and MSSF…VITL.

Belongs to the dynein heavy chain family. As to quaternary structure, the cytoplasmic dynein complex 2 is probably composed by a DHC1B homodimer and a number of D1BLIC light intermediate chains. Interacts with FAP133, FLA10 and LC8.

It is found in the cytoplasm. The protein localises to the cytoskeleton. It localises to the flagellum basal body. Its subcellular location is the cell projection. The protein resides in the cilium. It is found in the flagellum membrane. In terms of biological role, may function as a motor for intraflagellar retrograde transport. Functions in flagellar biogenesis. This is Cytoplasmic dynein 2 heavy chain 1 (DHC1B) from Chlamydomonas reinhardtii (Chlamydomonas smithii).